The following is a 390-amino-acid chain: Neutrophil cytosol factor 1 (390 aa).

In terms of domain architecture, PX spans 4–125 (TFIRHIALLG…DFFKVRPDDL (122 aa)). SH3 domains follow at residues 156–215 (IILQ…PLDS) and 226–285 (YAGE…KSGQ). The interval 285–390 (QDVSQAQRQI…STKRKLASAV (106 aa)) is disordered. 2 positions are modified to phosphoserine: Ser303 and Ser304. The segment covering 309 to 318 (HSIHQRSRKR) has biased composition (basic residues). Phosphoserine is present on residues Ser320, Ser328, Ser345, and Ser348.

As to quaternary structure, component of the phagocyte NADPH oxidase complex composed of an obligatory core heterodimer formed by the membrane proteins CYBA and CYBB and the cytosolic regulatory subunits NCF1/p47-phox, NCF2/p67-phox, NCF4/p40-phox and the small GTPase RAC1 or RAC2. Part of a cytosolic complex composed at least by NCF1, NCF2 and NCF4. Interacts (via C-terminus) with NCF2 (via the C-terminal SH3 domain). Interacts with NCF4. Interacts with CYBB. Interacts (via the second SH3 domain) with CYBA; interaction is phosphorylation-dependent. Interacts with NOXA1. Interacts with ADAM15. Interacts with TRAF4. Interacts with FASLG. Interacts with PARK7 (via C-terminus); the interaction is enhanced by LPS and modulates NCF1 phosphorylation and membrane translocation. Post-translationally, phosphorylated by PRKCD; phosphorylation induces activation of NCF1, leading to assembly and activation of the NADPH oxidase complex. As to expression, detected in peripheral blood monocytes and neutrophils (at protein level).

It is found in the cytoplasm. The protein localises to the cytosol. It localises to the membrane. Its function is as follows. Subunit of the phagocyte NADPH oxidase complex that mediates the transfer of electrons from cytosolic NADPH to O2 to produce the superoxide anion (O2(-)). In the activated complex, electrons are first transferred from NADPH to flavin adenine dinucleotide (FAD) and subsequently transferred via two heme molecules to molecular oxygen, producing superoxide through an outer-sphere reaction. Activation of the NADPH oxidase complex is initiated by the assembly of cytosolic subunits of the NADPH oxidase complex with the core NADPH oxidase complex to form a complex at the plasma membrane or phagosomal membrane. This activation process is initiated by phosphorylation dependent binding of the cytosolic NCF1/p47-phox subunit to the C-terminus of CYBA/p22-phox. This Homo sapiens (Human) protein is Neutrophil cytosol factor 1.